Here is a 401-residue protein sequence, read N- to C-terminus: Multidrug resistance protein MdtH (401 aa).

A run of 11 helical transmembrane segments spans residues 13–33 (YFLL…FPLI), 34–54 (SIRF…ALGL), 99–116 (PWIL…GTLF), 139–159 (LLMM…SWLL), 165–185 (FVCW…VWLL), 214–234 (VLTL…LPIV), 243–263 (AAVK…LYPI), 277–297 (LMFG…ITHL), 299–319 (TLFM…PARE), 340–360 (LGLA…YDTG), and 368–388 (LPWF…YWQF).

Belongs to the major facilitator superfamily. DHA1 family. MdtH (TC 2.A.1.2.21) subfamily.

It is found in the cell inner membrane. This Yersinia enterocolitica serotype O:8 / biotype 1B (strain NCTC 13174 / 8081) protein is Multidrug resistance protein MdtH.